We begin with the raw amino-acid sequence, 129 residues long: Large ribosomal subunit protein bL12 (129 aa).

It belongs to the bacterial ribosomal protein bL12 family. Homodimer. Part of the ribosomal stalk of the 50S ribosomal subunit. Forms a multimeric L10(L12)X complex, where L10 forms an elongated spine to which 2 to 4 L12 dimers bind in a sequential fashion. Binds GTP-bound translation factors.

In terms of biological role, forms part of the ribosomal stalk which helps the ribosome interact with GTP-bound translation factors. Is thus essential for accurate translation. The chain is Large ribosomal subunit protein bL12 from Micrococcus luteus (strain ATCC 4698 / DSM 20030 / JCM 1464 / CCM 169 / CCUG 5858 / IAM 1056 / NBRC 3333 / NCIMB 9278 / NCTC 2665 / VKM Ac-2230) (Micrococcus lysodeikticus).